A 221-amino-acid chain; its full sequence is Probable GTP-binding protein EngB (221 aa).

One can recognise an EngB-type G domain in the interval 23-211 (PLREVAFAGR…DNLIIKWLFE (189 aa)). Positions 38 and 60 each coordinate Mg(2+).

This sequence belongs to the TRAFAC class TrmE-Era-EngA-EngB-Septin-like GTPase superfamily. EngB GTPase family. The cofactor is Mg(2+).

In terms of biological role, necessary for normal cell division and for the maintenance of normal septation. The sequence is that of Probable GTP-binding protein EngB from Polynucleobacter asymbioticus (strain DSM 18221 / CIP 109841 / QLW-P1DMWA-1) (Polynucleobacter necessarius subsp. asymbioticus).